Consider the following 378-residue polypeptide: 2-aminoethylphosphonate--pyruvate transaminase 1 (378 aa).

Residue lysine 194 is modified to N6-(pyridoxal phosphate)lysine.

It belongs to the class-V pyridoxal-phosphate-dependent aminotransferase family. PhnW subfamily. In terms of assembly, homodimer. Requires pyridoxal 5'-phosphate as cofactor.

It carries out the reaction (2-aminoethyl)phosphonate + pyruvate = phosphonoacetaldehyde + L-alanine. Its function is as follows. Involved in phosphonate degradation. The sequence is that of 2-aminoethylphosphonate--pyruvate transaminase 1 from Cupriavidus pinatubonensis (strain JMP 134 / LMG 1197) (Cupriavidus necator (strain JMP 134)).